Here is a 310-residue protein sequence, read N- to C-terminus: MRRAALWLWLCALALSLQPALPQIVATNLPPEDQDGSGDDSDNFSGSGAGALQDITLSQQTPSTWKDTQLLTAIPTSPEPTGLEATAASTSTLPAGEGPKEGEAVVLPEVEPGLTAREQEATPRPRETTQLPTTHLASTTTATTAQEPATSHPHRDMQPGHHETSTPAGPSQADLHTPHTEDGGPSATERAAEDGASSQLPAAEGSGEQDFTFETSGENTAVVAVEPDRRNQSPVDQGATGASQGLLDRKEVLGGVIAGGLVGLIFAVCLVGFMLYRMKKKDEGSYSLEEPKQANGGAYQKPTKQEEFYA.

Residues M1–P22 form the signal peptide. Topologically, residues Q23–G254 are extracellular. Disordered regions lie at residues T27–K100 and L114–T212. Residues E32–D42 show a composition bias toward acidic residues. A glycan (O-linked (Xyl...) (chondroitin sulfate) serine) is linked at S37. A glycan (N-linked (GlcNAc...) asparagine) is linked at N43. 2 O-linked (Xyl...) (heparan sulfate) serine glycosylation sites follow: S45 and S47. Residues I55–P75 are compositionally biased toward polar residues. The span at R117–E127 shows a compositional bias: basic and acidic residues. The segment covering T128 to S151 has biased composition (low complexity). A compositionally biased stretch (basic and acidic residues) spans P153–T164. Residues S206 and S216 are each glycosylated (O-linked (Xyl...) (chondroitin sulfate) serine). A helical membrane pass occupies residues G255–L275. The Cytoplasmic segment spans residues Y276–A310. A disordered region spans residues G284 to A310. S285 bears the Phosphoserine mark.

This sequence belongs to the syndecan proteoglycan family. As to quaternary structure, interacts with CDCP1. Interacts (via C-terminus) with TIAM1 (via PDZ domain). Interacts with MDK. Post-translationally, shedding is enhanced by a number of factors such as heparanase, thrombin or EGF. Also by stress and wound healing. PMA-mediated shedding is inhibited by TIMP3. In terms of tissue distribution, detected in placenta (at protein level). Detected in fibroblasts (at protein level).

The protein localises to the membrane. The protein resides in the secreted. It is found in the extracellular exosome. In terms of biological role, cell surface proteoglycan that contains both heparan sulfate and chondroitin sulfate and that links the cytoskeleton to the interstitial matrix. Regulates exosome biogenesis in concert with SDCBP and PDCD6IP. Able to induce its own expression in dental mesenchymal cells and also in the neighboring dental epithelial cells via an MSX1-mediated pathway. The protein is Syndecan-1 of Homo sapiens (Human).